The chain runs to 266 residues: 3-methyl-2-oxobutanoate hydroxymethyltransferase (266 aa).

Residues Asp-47 and Asp-86 each contribute to the Mg(2+) site. 3-methyl-2-oxobutanoate-binding positions include 47-48 (DS), Asp-86, and Lys-114. Residue Glu-116 participates in Mg(2+) binding. Glu-183 functions as the Proton acceptor in the catalytic mechanism.

This sequence belongs to the PanB family. Homodecamer; pentamer of dimers. It depends on Mg(2+) as a cofactor.

It is found in the cytoplasm. It carries out the reaction 3-methyl-2-oxobutanoate + (6R)-5,10-methylene-5,6,7,8-tetrahydrofolate + H2O = 2-dehydropantoate + (6S)-5,6,7,8-tetrahydrofolate. It participates in cofactor biosynthesis; (R)-pantothenate biosynthesis; (R)-pantoate from 3-methyl-2-oxobutanoate: step 1/2. Functionally, catalyzes the reversible reaction in which hydroxymethyl group from 5,10-methylenetetrahydrofolate is transferred onto alpha-ketoisovalerate to form ketopantoate. The chain is 3-methyl-2-oxobutanoate hydroxymethyltransferase from Idiomarina loihiensis (strain ATCC BAA-735 / DSM 15497 / L2-TR).